We begin with the raw amino-acid sequence, 553 residues long: Vacuolar fusion protein MON1 homolog B (553 aa).

Methionine 1 carries the post-translational modification N-acetylmethionine. Disordered stretches follow at residues 1–111 (MEAG…DEDW) and 534–553 (STPP…FTGL). The span at 23–35 (FPREEAGDSERVH) shows a compositional bias: basic and acidic residues. Over residues 52–72 (KDQPSSLLSPLPQTEAASSTC) the composition is skewed to polar residues. Serine 57 is modified (phosphoserine). Over residues 78-95 (AAASDSSPPGEPESNSEG) the composition is skewed to low complexity. Residues 96 to 108 (QGEDPDDGGDPSD) are compositionally biased toward acidic residues. The span at 541–553 (ADQAPNNGLFTGL) shows a compositional bias: polar residues.

This sequence belongs to the MON1/SAND family. In terms of assembly, interacts with CCNT2; down-regulates CCNT2-mediated activation of viral promoters during herpes simplex virus 1/HHV-1 infection. Found in a complex with RMC1, CCZ1 MON1A and MON1B.

This Mus musculus (Mouse) protein is Vacuolar fusion protein MON1 homolog B (Mon1b).